We begin with the raw amino-acid sequence, 304 residues long: UDP-3-O-acyl-N-acetylglucosamine deacetylase (304 aa).

Residues His78, His237, and Asp241 each contribute to the Zn(2+) site. His264 acts as the Proton donor in catalysis.

It belongs to the LpxC family. Zn(2+) is required as a cofactor.

The catalysed reaction is a UDP-3-O-[(3R)-3-hydroxyacyl]-N-acetyl-alpha-D-glucosamine + H2O = a UDP-3-O-[(3R)-3-hydroxyacyl]-alpha-D-glucosamine + acetate. It functions in the pathway glycolipid biosynthesis; lipid IV(A) biosynthesis; lipid IV(A) from (3R)-3-hydroxytetradecanoyl-[acyl-carrier-protein] and UDP-N-acetyl-alpha-D-glucosamine: step 2/6. Its function is as follows. Catalyzes the hydrolysis of UDP-3-O-myristoyl-N-acetylglucosamine to form UDP-3-O-myristoylglucosamine and acetate, the committed step in lipid A biosynthesis. The protein is UDP-3-O-acyl-N-acetylglucosamine deacetylase of Xylella fastidiosa (strain Temecula1 / ATCC 700964).